We begin with the raw amino-acid sequence, 186 residues long: Casparian strip membrane protein 6 (186 aa).

The Cytoplasmic portion of the chain corresponds to 1–23; sequence MKAGPIELGEGKSSAPKAAVNRG. The chain crosses the membrane as a helical span at residues 24-44; that stretch reads VAILDFILRILAFIGTLGSAI. Residues 45–73 lie on the Extracellular side of the membrane; the sequence is SMATTNETLPFFTQFIRFRAEYDDLPTFT. N50 is a glycosylation site (N-linked (GlcNAc...) asparagine). Residues 74–94 traverse the membrane as a helical segment; the sequence is FFVVANGVVSAYLLFSLPFSI. Over 95–106 the chain is Cytoplasmic; it reads FNIVRSKAQNSR. The helical transmembrane segment at 107-127 threads the bilayer; that stretch reads ILLIILDTAMLGLLSAGASAA. At 128–160 the chain is on the extracellular side; sequence AAIVYLAHQGNVRTNWSAICQQFNSFCERISGS. A glycan (N-linked (GlcNAc...) asparagine) is linked at N142. A helical transmembrane segment spans residues 161 to 181; it reads LIGSFIGVVVFILLISLSAVA. Residues 182–186 lie on the Cytoplasmic side of the membrane; it reads LSRHK.

The protein belongs to the Casparian strip membrane proteins (CASP) family. In terms of assembly, homodimer and heterodimers.

Its subcellular location is the cell membrane. Regulates membrane-cell wall junctions and localized cell wall deposition. Required for establishment of the Casparian strip membrane domain (CSD) and the subsequent formation of Casparian strips, a cell wall modification of the root endodermis that determines an apoplastic barrier between the intraorganismal apoplasm and the extraorganismal apoplasm and prevents lateral diffusion. The polypeptide is Casparian strip membrane protein 6 (Populus trichocarpa (Western balsam poplar)).